Reading from the N-terminus, the 699-residue chain is Bifunctional protein GAL10 (699 aa).

The interval 1–357 (MTAQLQSEST…TTENPFGYQL (357 aa)) is galactowaldenase. Position 13 to 44 (13 to 44 (IVLVTGGAGYIGSHTVVELIENGYDCVVADNL)) interacts with NAD(+). The tract at residues 358 to 699 (RGVEARFSAE…YGSKIVYRFS (342 aa)) is mutarotase. His-537 acts as the For mutarotase activity in catalysis. Ser-562 carries the post-translational modification Phosphoserine.

This sequence in the N-terminal section; belongs to the NAD(P)-dependent epimerase/dehydratase family. In the C-terminal section; belongs to the aldose epimerase family. It depends on NAD(+) as a cofactor.

It carries out the reaction UDP-alpha-D-glucose = UDP-alpha-D-galactose. The enzyme catalyses alpha-D-glucose = beta-D-glucose. The protein operates within carbohydrate metabolism; galactose metabolism. It functions in the pathway carbohydrate metabolism; hexose metabolism. In terms of biological role, mutarotase converts alpha-aldose to the beta-anomer. It is active on D-glucose, L-arabinose, D-xylose, D-galactose, maltose and lactose. This chain is Bifunctional protein GAL10 (GAL10), found in Saccharomyces cerevisiae (strain ATCC 204508 / S288c) (Baker's yeast).